Consider the following 1345-residue polypeptide: Protein dispatched homolog 2 (1345 aa).

The interval Met1–Pro28 is disordered. Residues Val125–Gly145 form a helical membrane-spanning segment. N-linked (GlcNAc...) asparagine glycosylation is found at Asn304 and Asn420. An SSD domain is found at Leu429 to Leu598. Transmembrane regions (helical) follow at residues Leu440–Leu460, Leu465–Leu485, Phe497–Phe517, Phe544–Leu564, Cys572–Leu592, and Tyr659–Ser679. Asn776 carries an N-linked (GlcNAc...) asparagine glycan. The next 5 membrane-spanning stretches (helical) occupy residues Pro919 to Trp939, Leu945 to Leu965, Ala974 to Ser994, Ala1019 to Leu1039, and Leu1043 to Gln1063. Disordered stretches follow at residues Val1251–Ile1271 and Pro1295–Ser1345. The span at Met1297 to Ser1306 shows a compositional bias: polar residues. Residue Arg1310 is modified to Omega-N-methylarginine.

The protein belongs to the dispatched family.

It is found in the membrane. The sequence is that of Protein dispatched homolog 2 (Disp2) from Mus musculus (Mouse).